Consider the following 367-residue polypeptide: Biotin synthase (367 aa).

A Radical SAM core domain is found at 67 to 291 (NAVQISTLLS…IAVTRICCPS (225 aa)). [4Fe-4S] cluster contacts are provided by C82, C86, and C89. C128, C159, C219, and R295 together coordinate [2Fe-2S] cluster.

This sequence belongs to the radical SAM superfamily. Biotin synthase family. Homodimer. The cofactor is [4Fe-4S] cluster. [2Fe-2S] cluster is required as a cofactor.

The enzyme catalyses (4R,5S)-dethiobiotin + (sulfur carrier)-SH + 2 reduced [2Fe-2S]-[ferredoxin] + 2 S-adenosyl-L-methionine = (sulfur carrier)-H + biotin + 2 5'-deoxyadenosine + 2 L-methionine + 2 oxidized [2Fe-2S]-[ferredoxin]. It participates in cofactor biosynthesis; biotin biosynthesis; biotin from 7,8-diaminononanoate: step 2/2. Its function is as follows. Catalyzes the conversion of dethiobiotin (DTB) to biotin by the insertion of a sulfur atom into dethiobiotin via a radical-based mechanism. The sequence is that of Biotin synthase from Psychrobacter sp. (strain PRwf-1).